Here is a 425-residue protein sequence, read N- to C-terminus: UDP-N-acetylglucosamine 1-carboxyvinyltransferase (425 aa).

22-23 (KN) is a phosphoenolpyruvate binding site. Position 93 (Arg-93) interacts with UDP-N-acetyl-alpha-D-glucosamine. Residue Asp-117 is the Proton donor of the active site. UDP-N-acetyl-alpha-D-glucosamine contacts are provided by Asp-312 and Met-334.

This sequence belongs to the EPSP synthase family. MurA subfamily.

The protein resides in the cytoplasm. The enzyme catalyses phosphoenolpyruvate + UDP-N-acetyl-alpha-D-glucosamine = UDP-N-acetyl-3-O-(1-carboxyvinyl)-alpha-D-glucosamine + phosphate. The protein operates within cell wall biogenesis; peptidoglycan biosynthesis. Its function is as follows. Cell wall formation. Adds enolpyruvyl to UDP-N-acetylglucosamine. This is UDP-N-acetylglucosamine 1-carboxyvinyltransferase from Treponema pallidum (strain Nichols).